The sequence spans 150 residues: Putative TBC1 domain family member 29 (150 aa).

The region spanning 1-43 is the Rab-GAP TBC; truncated domain; it reads MGHLDKEGLCTQGSSFSWLLRVLNDGISLGLTPCLWDMYLLEG. Over residues 102–111 the composition is skewed to polar residues; it reads ESSRGPSLLQ. The segment at 102 to 125 is disordered; that stretch reads ESSRGPSLLQTPPRVPGQQALSRG.

The chain is Putative TBC1 domain family member 29 from Homo sapiens (Human).